The sequence spans 541 residues: MYDNMSTMVYIKEEKLENVTQDEIISKTKQVIQGLEALKNEHNSILQSLLETLKCLKKDDESNLVEEKSSMIRKSLEMLELGLSEAQVMMALSNHLNAVESEKQNVRAQVRRLCQENQWLRDELANTQQKLQKSEQSVAQLEEEKKHLEFMNQLKKYDDDISPSEDKDSDSSKEPLDDLFPNDEDEPGQGIQHSDSSAAAARQGYEIPARLRTLHNLVIQYASQGRYEVAVPSCKQALEDLEKTSGHDHPDVATMLNILALVYRDQNKYKDAANLLNDALAIREKTLGRDHPAVAATLNNLAVLYGKRGKYKEAEPLCKRALEIREKVLGKDHPDVAKQLNNLALLCQNQGKYEEVEYYYQRALGIYQTKLGPDRTPNVAKTKNNLASCYLKQGKFKQAETLYKEILTRAHEAEFGSVDDENKPIWMHAEEREECKGKQKDGSAFGEYGGWYKACKVDSPTVTTTLKNLGALYRRQGKFEAAETLEEAAMRSRKQGLDNVHKQRVAEVLNDPESMEKRRSRESLNMDVVKYESGPDGGEEA.

Residues 27 to 156 (KTKQVIQGLE…HLEFMNQLKK (130 aa)) adopt a coiled-coil conformation. The segment covering 156-176 (KYDDDISPSEDKDSDSSKEPL) has biased composition (basic and acidic residues). The interval 156–201 (KYDDDISPSEDKDSDSSKEPLDDLFPNDEDEPGQGIQHSDSSAAAA) is disordered. S162 carries the phosphoserine modification. 5 TPR repeats span residues 211–244 (LRTLHNLVIQYASQGRYEVAVPSCKQALEDLEKT), 253–286 (ATMLNILALVYRDQNKYKDAANLLNDALAIREKT), 295–328 (AATLNNLAVLYGKRGKYKEAEPLCKRALEIREKV), 337–370 (AKQLNNLALLCQNQGKYEEVEYYYQRALGIYQTK), and 380–413 (AKTKNNLASCYLKQGKFKQAETLYKEILTRAHEA). Y448 carries the post-translational modification Phosphotyrosine. At S459 the chain carries Phosphoserine. Residues 463 to 496 (TTTLKNLGALYRRQGKFEAAETLEEAAMRSRKQG) form a TPR 6 repeat. Residues 493–541 (RKQGLDNVHKQRVAEVLNDPESMEKRRSRESLNMDVVKYESGPDGGEEA) form a disordered region. 2 stretches are compositionally biased toward basic and acidic residues: residues 495–505 (QGLDNVHKQRV) and 514–524 (SMEKRRSRESL). A phosphoserine; by AMPK mark is found at S520 and S523.

It belongs to the kinesin light chain family. As to quaternary structure, oligomeric complex composed of two heavy chains and two light chains. Interacts with SPAG9. Interacts with ATCAY; may link mitochondria to KLC1 and regulate mitochondria localization into neuron projections. Interacts (via TPR repeats) with TOR1A; the interaction associates TOR1A with the kinesin oligomeric complex. Interacts with BORCS5. Interacts with MAPK8IP3/JIP3 and NTRK2/TRKB; interaction with NTRK2/TRKB is mediated by MAPK8IP3/JIP3. Interacts with CLSTN1; phosphorylation at Ser-459 inhibits interaction with CLSTN1. Phosphorylation at Ser-459 by ERK inhibits interaction with CLSTN1 and localization to cytoplasmic vesicles.

Its subcellular location is the cell projection. It localises to the growth cone. It is found in the cytoplasmic vesicle. The protein localises to the cytoplasm. The protein resides in the cytoskeleton. Its function is as follows. Kinesin is a microtubule-associated force-producing protein that may play a role in organelle transport. The light chain may function in coupling of cargo to the heavy chain or in the modulation of its ATPase activity. The protein is Kinesin light chain 1 (Klc1) of Mus musculus (Mouse).